A 380-amino-acid chain; its full sequence is Cytochrome b (380 aa).

Helical transmembrane passes span 34–54, 78–99, 114–134, and 179–199; these read FGSL…LLAM, WLIR…YLHI, WNTG…GYVL, and FFAL…IHLT. The heme b site is built by His-84 and His-98. 2 residues coordinate heme b: His-183 and His-197. His-202 lines the a ubiquinone pocket. Transmembrane regions (helical) follow at residues 227–247, 289–309, 321–341, and 348–368; these read LKDI…ALFS, LGGV…PFLH, ISQL…WVGS, and FIII…ILFP.

Belongs to the cytochrome b family. In terms of assembly, the cytochrome bc1 complex contains 11 subunits: 3 respiratory subunits (MT-CYB, CYC1 and UQCRFS1), 2 core proteins (UQCRC1 and UQCRC2) and 6 low-molecular weight proteins (UQCRH/QCR6, UQCRB/QCR7, UQCRQ/QCR8, UQCR10/QCR9, UQCR11/QCR10 and a cleavage product of UQCRFS1). This cytochrome bc1 complex then forms a dimer. The cofactor is heme b.

It is found in the mitochondrion inner membrane. Its function is as follows. Component of the ubiquinol-cytochrome c reductase complex (complex III or cytochrome b-c1 complex) that is part of the mitochondrial respiratory chain. The b-c1 complex mediates electron transfer from ubiquinol to cytochrome c. Contributes to the generation of a proton gradient across the mitochondrial membrane that is then used for ATP synthesis. The protein is Cytochrome b (MT-CYB) of Pelecanoides garnotii (Peruvian diving petrel).